A 256-amino-acid polypeptide reads, in one-letter code: 5-oxoprolinase subunit A (256 aa).

The protein belongs to the LamB/PxpA family. In terms of assembly, forms a complex composed of PxpA, PxpB and PxpC.

It catalyses the reaction 5-oxo-L-proline + ATP + 2 H2O = L-glutamate + ADP + phosphate + H(+). In terms of biological role, catalyzes the cleavage of 5-oxoproline to form L-glutamate coupled to the hydrolysis of ATP to ADP and inorganic phosphate. This Geobacillus thermodenitrificans (strain NG80-2) protein is 5-oxoprolinase subunit A.